The chain runs to 146 residues: Hemoglobin subunit beta (146 aa).

Residue Val-1 is modified to N-acetylvaline. The region spanning 2–146 (HLTGEEKSLV…VANALAHKYH (145 aa)) is the Globin domain. Thr-12 is modified (phosphothreonine). Position 44 is a phosphoserine (Ser-44). Lys-59 is modified (N6-acetyllysine). Residue His-63 coordinates heme b. Lys-82 is modified (N6-acetyllysine). Residue His-92 participates in heme b binding. Cys-93 carries the S-nitrosocysteine modification. Residue Lys-144 is modified to N6-acetyllysine.

Belongs to the globin family. As to quaternary structure, heterotetramer of two alpha chains and two beta chains. As to expression, red blood cells.

In terms of biological role, involved in oxygen transport from the lung to the various peripheral tissues. The chain is Hemoglobin subunit beta (HBB) from Ursus maritimus (Polar bear).